A 339-amino-acid polypeptide reads, in one-letter code: Heat-inducible transcription repressor HrcA (339 aa).

The protein belongs to the HrcA family.

Negative regulator of class I heat shock genes (grpE-dnaK-dnaJ and groELS operons). Prevents heat-shock induction of these operons. The polypeptide is Heat-inducible transcription repressor HrcA (Thermotoga neapolitana (strain ATCC 49049 / DSM 4359 / NBRC 107923 / NS-E)).